Consider the following 137-residue polypeptide: NADH-quinone oxidoreductase subunit A (137 aa).

Transmembrane regions (helical) follow at residues 12-32 (WGFAIFLLGVVGLCAFMLGVS), 66-86 (FYLVAMLFVIFDIEALFLFAW), and 96-116 (TGFVEALVFIAILLAGLVYLF).

Belongs to the complex I subunit 3 family. In terms of assembly, NDH-1 is composed of 13 different subunits. Subunits NuoA, H, J, K, L, M, N constitute the membrane sector of the complex.

It localises to the cell inner membrane. The enzyme catalyses a quinone + NADH + 5 H(+)(in) = a quinol + NAD(+) + 4 H(+)(out). Its function is as follows. NDH-1 shuttles electrons from NADH, via FMN and iron-sulfur (Fe-S) centers, to quinones in the respiratory chain. The immediate electron acceptor for the enzyme in this species is believed to be ubiquinone. Couples the redox reaction to proton translocation (for every two electrons transferred, four hydrogen ions are translocated across the cytoplasmic membrane), and thus conserves the redox energy in a proton gradient. In Pseudomonas fluorescens (strain Pf0-1), this protein is NADH-quinone oxidoreductase subunit A.